Consider the following 352-residue polypeptide: Secreted RxLR effector protein 122 (352 aa).

The signal sequence occupies residues 1 to 21; that stretch reads MRGAYYVLIALLVVASSQTSA. Positions 48-65 match the RxLR-dEER motif; sequence QFLRGSRNVPGDLAHEER. Residues 280 to 290 show a composition bias toward low complexity; that stretch reads RGGTTGASRGT. Residues 280–352 form a disordered region; the sequence is RGGTTGASRG…VEPEGHRSKP (73 aa). Polar residues predominate over residues 302 to 315; sequence AASTSKGKSSVFTE.

Belongs to the RxLR effector family.

It localises to the secreted. It is found in the host nucleus. Its function is as follows. Secreted effector that acts as an elicitor that induces cell death in host plant cells. The chain is Secreted RxLR effector protein 122 from Plasmopara viticola (Downy mildew of grapevine).